The primary structure comprises 367 residues: MKASPHRPTKALIHLGAIRQNIQQMGAHIPQGTLKLAVVKANAYGHGAVAVAKAIQDDVDGFCVSNIDEAIELRQAGLSKPILILGVSEIEAVALAKEYDFTLTVAGLEWIQALLDKEVDLTGLTVHLKIDSGMGRIGFREASEVEQAQDLLQQHGVCVEGIFTHFATADEESDDYFNAQLERFKTILASMKEVPELVHASNSATTLWHVETIFNAVRMGDAMYGLNPSGAVLDLPYDLIPALTLESALVHVKTVPAGACMGYGATYQADSEQVIATVPIGYADGWTRDMQNFSVLVDGQACPIVGRVSMDQITIRLPKPYPLGTKVTLIGSNGDKEITATQVATYRVTINYEVVCLLSDRIPREYY.

K40 serves as the catalytic Proton acceptor; specific for D-alanine. K40 is modified (N6-(pyridoxal phosphate)lysine). R136 serves as a coordination point for substrate. Y263 acts as the Proton acceptor; specific for L-alanine in catalysis. Position 310 (M310) interacts with substrate.

The protein belongs to the alanine racemase family. Pyridoxal 5'-phosphate is required as a cofactor.

The catalysed reaction is L-alanine = D-alanine. The protein operates within amino-acid biosynthesis; D-alanine biosynthesis; D-alanine from L-alanine: step 1/1. Its function is as follows. Catalyzes the interconversion of L-alanine and D-alanine. May also act on other amino acids. The chain is Alanine racemase (alr) from Streptococcus pneumoniae serotype 19F (strain G54).